The chain runs to 31 residues: Cyclotide cter-R (31 aa).

The cyclopeptide (Gly-Asn) cross-link spans G1–N31. Intrachain disulfides connect C4–C21, C8–C23, and C13–C28.

In terms of processing, this is a cyclic peptide.

Its subcellular location is the secreted. Functionally, probably participates in a plant defense mechanism. The polypeptide is Cyclotide cter-R (Clitoria ternatea (Butterfly pea)).